Consider the following 225-residue polypeptide: Ribonuclease 3 (225 aa).

Residues 5 to 127 (IEKLTRQLGY…IIGAVYLDSD (123 aa)) form the RNase III domain. E40 provides a ligand contact to Mg(2+). The active site involves D44. The Mg(2+) site is built by D113 and E116. Residue E116 is part of the active site. One can recognise a DRBM domain in the interval 154–224 (DPKTRLQEFL…AELALEQLTN (71 aa)).

Belongs to the ribonuclease III family. As to quaternary structure, homodimer. Mg(2+) serves as cofactor.

The protein resides in the cytoplasm. It catalyses the reaction Endonucleolytic cleavage to 5'-phosphomonoester.. Digests double-stranded RNA. Involved in the processing of primary rRNA transcript to yield the immediate precursors to the large and small rRNAs (23S and 16S). Processes some mRNAs, and tRNAs when they are encoded in the rRNA operon. Processes pre-crRNA and tracrRNA of type II CRISPR loci if present in the organism. This Vibrio vulnificus (strain YJ016) protein is Ribonuclease 3.